We begin with the raw amino-acid sequence, 1370 residues long: DNA-directed RNA polymerase subunit beta (1370 aa).

The protein belongs to the RNA polymerase beta chain family. As to quaternary structure, the RNAP catalytic core consists of 2 alpha, 1 beta, 1 beta' and 1 omega subunit. When a sigma factor is associated with the core the holoenzyme is formed, which can initiate transcription.

It catalyses the reaction RNA(n) + a ribonucleoside 5'-triphosphate = RNA(n+1) + diphosphate. DNA-dependent RNA polymerase catalyzes the transcription of DNA into RNA using the four ribonucleoside triphosphates as substrates. The chain is DNA-directed RNA polymerase subunit beta from Geobacter sulfurreducens (strain ATCC 51573 / DSM 12127 / PCA).